The primary structure comprises 457 residues: Adenylosuccinate synthetase isozyme 2 A (457 aa).

GTP contacts are provided by residues 40–46 and 68–70; these read GDEGKGK and GHT. The active-site Proton acceptor is D41. D41 and G68 together coordinate Mg(2+). A substrate-binding site is contributed by D41. Residues 41 to 44, 66 to 69, T163, R177, N256, T271, and R335 each bind IMP; these read DEGK and NAGH. H69 acts as the Proton donor in catalysis. 331 to 337 serves as a coordination point for substrate; that stretch reads VTTGRKR. GTP contacts are provided by residues R337, 363–365, and 445–448; these read KLD and GVGK.

This sequence belongs to the adenylosuccinate synthetase family. In terms of assembly, homodimer. Requires Mg(2+) as cofactor.

The protein resides in the cytoplasm. Its subcellular location is the mitochondrion. The catalysed reaction is IMP + L-aspartate + GTP = N(6)-(1,2-dicarboxyethyl)-AMP + GDP + phosphate + 2 H(+). The protein operates within purine metabolism; AMP biosynthesis via de novo pathway; AMP from IMP: step 1/2. Its activity is regulated as follows. Inhibited competitively by AMP and IMP and non-competitively by fructose 1,6-bisphosphate. Its function is as follows. Plays an important role in the de novo pathway and in the salvage pathway of purine nucleotide biosynthesis. Catalyzes the first committed step in the biosynthesis of AMP from IMP. The polypeptide is Adenylosuccinate synthetase isozyme 2 A (adss2-a) (Xenopus tropicalis (Western clawed frog)).